Here is a 69-residue protein sequence, read N- to C-terminus: Small ribosomal subunit protein bS21 (69 aa).

The interval lysine 50–arginine 69 is disordered.

It belongs to the bacterial ribosomal protein bS21 family.

The protein is Small ribosomal subunit protein bS21 of Borrelia garinii subsp. bavariensis (strain ATCC BAA-2496 / DSM 23469 / PBi) (Borreliella bavariensis).